The primary structure comprises 111 residues: UPF0145 protein RBAM_010660 (111 aa).

It belongs to the UPF0145 family.

The protein is UPF0145 protein RBAM_010660 of Bacillus velezensis (strain DSM 23117 / BGSC 10A6 / LMG 26770 / FZB42) (Bacillus amyloliquefaciens subsp. plantarum).